Reading from the N-terminus, the 349-residue chain is PhoH-like protein (349 aa).

An ATP-binding site is contributed by 147-154 (GPAGTGKT).

It belongs to the PhoH family.

It localises to the cytoplasm. In Mycobacterium leprae (strain TN), this protein is PhoH-like protein.